The following is a 242-amino-acid chain: MEGWQRAFVLHSRPWSETSLMLDVFTEESGRVRLVAKGARSKRSNLKGALQPFTPLLLRYSGRGEVKTLRSAEAVSLALPLSGITLYSGLYINELLSRVLEYETRFSELFFDYLNCIQALAGTTGSPEPALRRFELALLGHLGYGVNFTHCAGSGERVDDTMTYRYREEKGFFASVVIDNNTFTGRHLKALEEREFPDVDTLRASKRFTRMALKPYLGGKPLKSRELFRQFMPKRTVKMKKD.

It belongs to the RecO family. As to quaternary structure, monomer.

In terms of biological role, involved in DNA repair and RecF pathway recombination. This is DNA repair protein RecO from Salmonella gallinarum (strain 287/91 / NCTC 13346).